A 91-amino-acid chain; its full sequence is MKPNIHPDNYRTVLFFDSSANEGWLIRSCAETHGKTMVWTDGKEYPLFSLDTSSASHPVYTGKQRNVNTEGHASKFNQRFQSVMSSFRKDK.

It belongs to the bacterial ribosomal protein bL31 family. Type B subfamily. Part of the 50S ribosomal subunit.

This Neisseria meningitidis serogroup A / serotype 4A (strain DSM 15465 / Z2491) protein is Large ribosomal subunit protein bL31B.